The following is a 417-amino-acid chain: 4-hydroxy-3-methylbut-2-en-1-yl diphosphate synthase (flavodoxin) (417 aa).

[4Fe-4S] cluster is bound by residues cysteine 305, cysteine 308, cysteine 351, and glutamate 358.

The protein belongs to the IspG family. The cofactor is [4Fe-4S] cluster.

The catalysed reaction is (2E)-4-hydroxy-3-methylbut-2-enyl diphosphate + oxidized [flavodoxin] + H2O + 2 H(+) = 2-C-methyl-D-erythritol 2,4-cyclic diphosphate + reduced [flavodoxin]. The protein operates within isoprenoid biosynthesis; isopentenyl diphosphate biosynthesis via DXP pathway; isopentenyl diphosphate from 1-deoxy-D-xylulose 5-phosphate: step 5/6. Functionally, converts 2C-methyl-D-erythritol 2,4-cyclodiphosphate (ME-2,4cPP) into 1-hydroxy-2-methyl-2-(E)-butenyl 4-diphosphate. The protein is 4-hydroxy-3-methylbut-2-en-1-yl diphosphate synthase (flavodoxin) of Nitrosomonas europaea (strain ATCC 19718 / CIP 103999 / KCTC 2705 / NBRC 14298).